A 2286-amino-acid chain; its full sequence is Unconventional myosin-IXAb (2286 aa).

The Ras-associating domain occupies 16–114 (SEFTLRVYPG…YRFLLREKNL (99 aa)). A Myosin motor domain is found at 148–971 (AQFVADLCSL…LRQRLQDELH (824 aa)). Residues 178-198 (IYTYVGSILIAVNPFKFLPIY) form a helical membrane-spanning segment. Position 242–249 (242–249 (GESGSGKT)) interacts with ATP. An actin-binding region spans residues 853 to 875 (LNKLMETLGQSEPYFVKCIRSNA). 4 IQ domains span residues 976 to 996 (RRIV…HFCR), 1025 to 1054 (QQGA…AVLI), 1066 to 1095 (RNTA…AAVT), and 1089 to 1118 (QRRA…QQCR). The tract at residues 976 to 1113 (RRIVCLQRSF…QSRQRCRILR (138 aa)) is neck or regulatory domain. Residues 1114–2254 (EQQCREQSKH…PRANRSCPPK (1141 aa)) form a tail region. 4 disordered regions span residues 1118–1279 (REQS…QIRE), 1308–1341 (DVPL…FSVS), 1455–1588 (CEED…EPML), and 1732–1754 (DGTI…SDTV). The span at 1123-1133 (HPSTVTKSLHQ) shows a compositional bias: polar residues. Residues 1134–1149 (NTEEAEKLEEVWEKQT) show a composition bias toward basic and acidic residues. Polar residues predominate over residues 1263–1273 (PINSAPQTPNR). The span at 1455–1465 (CEEDEDDEYED) shows a compositional bias: acidic residues. The span at 1485-1501 (CVFHSDSEMSSQKEQKR) shows a compositional bias: basic and acidic residues. Residues 1529–1542 (RGKMRFWSKSKHGD) are compositionally biased toward basic residues. Basic and acidic residues-rich tracts occupy residues 1550 to 1562 (RSAD…RRND) and 1572 to 1585 (GVSE…ENRE). Residues 1759–1808 (GHIFKSTQYSIPTYCEFCSSLIWMMDKACVCKLCRYACHKKCCLRMTTKC) form a Phorbol-ester/DAG-type zinc finger. The Rho-GAP domain occupies 1823–2011 (VELSRLTSDE…LIICEQMRKY (189 aa)). Over residues 2032–2049 (LTHIRRSMGKSRARKSGH) the composition is skewed to basic residues. Disordered regions lie at residues 2032 to 2087 (LTHI…QQEE) and 2113 to 2286 (PRAS…EFMV). Residues 2080–2107 (QAAMQQEEKVLTQQIENLQKEKEELTYE) adopt a coiled-coil conformation. Composition is skewed to low complexity over residues 2176–2192 (SLDS…SVSS) and 2200–2211 (SSSSGPLFSSSS). The span at 2226–2238 (EQASLSARCASSS) shows a compositional bias: polar residues. A compositionally biased stretch (basic and acidic residues) spans 2254-2270 (KPREPGDTGGRRREHEF).

This sequence belongs to the TRAFAC class myosin-kinesin ATPase superfamily. Myosin family.

It localises to the membrane. Its subcellular location is the cytoplasm. The protein resides in the synapse. The protein localises to the cell projection. It is found in the growth cone. Its function is as follows. Myosins are actin-based motor molecules with ATPase activity. Unconventional myosins serve in intracellular movements. Regulates Rho by stimulating it's GTPase activity in neurons. Required for the regulation of neurite branching and motor neuron axon guidance. The protein is Unconventional myosin-IXAb (myo9ab) of Danio rerio (Zebrafish).